The following is a 266-amino-acid chain: MTTLSTLNKFKKDGTKFTCLTCYDAMFARMMEKAQIDTILIGDSLGMVVQGHDSTLPVTVDDMAYHTANVARSNKQALILADLPFMSYVTLPEAIANSRKLMQVGAHVIKIEGGSELCELVTMLAQAGTPTCVHLGLTPQSVNVFGGYKVQGRGDEAGQKLLDDAKAVVNAGAALLVLECVPAELAKAVTEAVAVPVIGIGAGADTDGQVLVMHDMLGMAHGRTPRFVHDFLTDERNTEHSIEGAFALYQQSVKEGSFPKEQHQFS.

Mg(2+) is bound by residues Asp43 and Asp82. 3-methyl-2-oxobutanoate is bound by residues 43-44 (DS), Asp82, and Lys110. Position 112 (Glu112) interacts with Mg(2+). Glu179 (proton acceptor) is an active-site residue.

Belongs to the PanB family. Homodecamer; pentamer of dimers. The cofactor is Mg(2+).

It is found in the cytoplasm. The catalysed reaction is 3-methyl-2-oxobutanoate + (6R)-5,10-methylene-5,6,7,8-tetrahydrofolate + H2O = 2-dehydropantoate + (6S)-5,6,7,8-tetrahydrofolate. The protein operates within cofactor biosynthesis; (R)-pantothenate biosynthesis; (R)-pantoate from 3-methyl-2-oxobutanoate: step 1/2. Catalyzes the reversible reaction in which hydroxymethyl group from 5,10-methylenetetrahydrofolate is transferred onto alpha-ketoisovalerate to form ketopantoate. The protein is 3-methyl-2-oxobutanoate hydroxymethyltransferase of Psychrobacter arcticus (strain DSM 17307 / VKM B-2377 / 273-4).